The primary structure comprises 434 residues: Gamma-enolase (434 aa).

N-acetylserine is present on Ser2. Lys5 is modified (N6-acetyllysine). Phosphothreonine is present on Thr26. Ser40 provides a ligand contact to Mg(2+). The residue at position 44 (Tyr44) is a Phosphotyrosine. Residue Lys60 is modified to N6-acetyllysine; alternate. Lys60 is subject to N6-succinyllysine; alternate. Lys64 carries the N6-acetyllysine modification. An N6-acetyllysine; alternate modification is found at Lys89. At Lys89 the chain carries N6-succinyllysine; alternate. His158 and Glu167 together coordinate substrate. Residues Lys193, Lys197, and Lys199 each carry the N6-acetyllysine modification. Lys202 bears the N6-acetyllysine; alternate mark. Lys202 participates in a covalent cross-link: Glycyl lysine isopeptide (Lys-Gly) (interchain with G-Cter in SUMO2); alternate. Glu210 serves as the catalytic Proton donor. Residues Lys228 and Lys233 each carry the N6-acetyllysine; alternate modification. Lys228 is modified (N6-succinyllysine; alternate). N6-(2-hydroxyisobutyryl)lysine; alternate is present on Lys233. Position 245 (Asp245) interacts with Mg(2+). Lys256 bears the N6-acetyllysine mark. Phosphoserine is present on Ser263. Tyr287 is modified (phosphotyrosine). Residue Ser291 is modified to Phosphoserine. 2 residues coordinate Mg(2+): Glu293 and Asp318. Substrate-binding residues include Glu293 and Asp318. 2 positions are modified to N6-acetyllysine: Lys335 and Lys343. Lys343 acts as the Proton acceptor in catalysis. Substrate is bound by residues 370–373 (SHRS) and Lys394. Lys406 carries the post-translational modification N6-acetyllysine.

It belongs to the enolase family. As to quaternary structure, mammalian enolase is composed of 3 isozyme subunits, alpha, beta and gamma, which can form homodimers or heterodimers which are cell-type and development-specific. Mg(2+) serves as cofactor. In terms of tissue distribution, skeletal muscle (at protein level). The alpha/alpha homodimer is expressed in embryo and in most adult tissues. The alpha/beta heterodimer and the beta/beta homodimer are found in striated muscle, and the alpha/gamma heterodimer and the gamma/gamma homodimer in neurons.

It is found in the cytoplasm. The protein localises to the cell membrane. The enzyme catalyses (2R)-2-phosphoglycerate = phosphoenolpyruvate + H2O. It participates in carbohydrate degradation; glycolysis; pyruvate from D-glyceraldehyde 3-phosphate: step 4/5. In terms of biological role, has neurotrophic and neuroprotective properties on a broad spectrum of central nervous system (CNS) neurons. Binds, in a calcium-dependent manner, to cultured neocortical neurons and promotes cell survival. The chain is Gamma-enolase (Eno2) from Mus musculus (Mouse).